The sequence spans 195 residues: Peptidyl-tRNA hydrolase (195 aa).

Y17 is a binding site for tRNA. H22 serves as the catalytic Proton acceptor. Residues Y68, N70, and N116 each coordinate tRNA.

It belongs to the PTH family. Monomer.

It localises to the cytoplasm. It carries out the reaction an N-acyl-L-alpha-aminoacyl-tRNA + H2O = an N-acyl-L-amino acid + a tRNA + H(+). In terms of biological role, hydrolyzes ribosome-free peptidyl-tRNAs (with 1 or more amino acids incorporated), which drop off the ribosome during protein synthesis, or as a result of ribosome stalling. Catalyzes the release of premature peptidyl moieties from peptidyl-tRNA molecules trapped in stalled 50S ribosomal subunits, and thus maintains levels of free tRNAs and 50S ribosomes. This Shewanella frigidimarina (strain NCIMB 400) protein is Peptidyl-tRNA hydrolase.